Here is a 193-residue protein sequence, read N- to C-terminus: Ectoine TRAP transporter small permease protein TeaB (193 aa).

4 helical membrane-spanning segments follow: residues 33-55 (ILALGVLLMATNTVANVIGRFAL), 65-82 (VNRILIIMITFAGIGYAA), 103-125 (RALMIVISLFTSLVMFFLMYYSV), and 145-167 (IFIIYVWVPLGFLITGIQYLFTA).

This sequence belongs to the TRAP transporter small permease family. In terms of assembly, the complex comprises the extracytoplasmic solute receptor protein TeaA, and the two transmembrane proteins TeaB and TeaC.

It localises to the cell inner membrane. Functionally, part of the tripartite ATP-independent periplasmic (TRAP) transport system TeaABC involved in the uptake of ectoine and hydroxyectoine in response to osmotic upshock. Probably functions as a recovery system for synthesized ectoine that leaks out of the cell. In Halomonas elongata (strain ATCC 33173 / DSM 2581 / NBRC 15536 / NCIMB 2198 / 1H9), this protein is Ectoine TRAP transporter small permease protein TeaB (teaB).